The primary structure comprises 75 residues: Accessory gland-specific peptide 57Da (75 aa).

Positions M1–A19 are cleaved as a signal peptide. Positions A55 to S75 are disordered. The segment covering A56–S75 has biased composition (low complexity).

Lumen fluid of male accessory glands, becomes seminal fluid.

The protein localises to the secreted. In terms of biological role, transferred from male to female during mating and may affect egglaying and behavior after mating. This chain is Accessory gland-specific peptide 57Da (Mst57Da), found in Drosophila melanogaster (Fruit fly).